A 672-amino-acid polypeptide reads, in one-letter code: Transcriptional activator of sulfur metabolism MET4 (672 aa).

A compositionally biased stretch (basic and acidic residues) spans M1–D10. The disordered stretch occupies residues M1–S44. The segment covering S29–S44 has biased composition (low complexity). 3 consecutive short sequence motifs (9aaTAD) follow at residues I89–V97, P102–N110, and S109–T117. Residues A95–L144 are transcriptional activation. Disordered regions lie at residues I157–S265 and T299–V347. Residues S165 to G174 are compositionally biased toward low complexity. The segment covering N175–P188 has biased composition (basic and acidic residues). An inhibitory region; AdoMet responsiveness; required for interaction with MET30 region spans residues P188–F235. The segment covering Q202–Q214 has biased composition (polar residues). Residues N226–N238 are compositionally biased toward low complexity. Composition is skewed to polar residues over residues G251 to S265 and H301 to Q321. The tract at residues V312–L375 is auxiliary; required for high transcriptional activity under nonrepressive growth conditions. The tract at residues L375–N403 is required for interaction with MET31 and MET32. S416 is modified (phosphoserine). Positions P475 to A574 are disordered. Residues S477–P486 show a composition bias toward polar residues. Over residues S487–D498 the composition is skewed to basic and acidic residues. Low complexity predominate over residues G499–V512. 2 stretches are compositionally biased toward basic and acidic residues: residues R519–S528 and S537–D565. A Phosphoserine modification is found at S564. One can recognise a bZIP domain in the interval K586–S649. The interval K601–K612 is basic motif. A coiled-coil region spans residues L609 to S648. The interval L614 to L642 is leucine-zipper.

Belongs to the bZIP family. Interacts with MET30. Tethered to DNA through two alternate complexes associating MET4 with MET28 and either MET31 or MET32. Interacts with MET28 and CBF1 through its leucine zipper to form a heteromeric complex.

It is found in the nucleus. Its function is as follows. Positive trans-acting factor capable of stimulating the transcription of the MET genes from the methionine biosynthetic pathway. MET4, MET28 and CBF1 are required for full induction of MET25 and MET16 gene transcription. MET4 controls as well the derepression of MET6. Required for the transcription of genes necessary for sulfur amino acid biosynthesis. Involved in the transcription activation of MET28 and MET30. Required for MET3 gene expression via assembly of the MET4-MET28-MET31 and MET4-MET28-MET32 complexes. Involved in response to cadmium and arsenic. Cadmium-activated MET4 also induces glutathione biosynthesis. The sequence is that of Transcriptional activator of sulfur metabolism MET4 (MET4) from Saccharomyces cerevisiae (strain ATCC 204508 / S288c) (Baker's yeast).